Reading from the N-terminus, the 104-residue chain is Large ribosomal subunit protein uL24 (104 aa).

The protein belongs to the universal ribosomal protein uL24 family. Part of the 50S ribosomal subunit.

Its function is as follows. One of two assembly initiator proteins, it binds directly to the 5'-end of the 23S rRNA, where it nucleates assembly of the 50S subunit. In terms of biological role, one of the proteins that surrounds the polypeptide exit tunnel on the outside of the subunit. This Buchnera aphidicola subsp. Baizongia pistaciae (strain Bp) protein is Large ribosomal subunit protein uL24.